A 213-amino-acid polypeptide reads, in one-letter code: Orotate phosphoribosyltransferase (213 aa).

A 5-phospho-alpha-D-ribose 1-diphosphate-binding site is contributed by K26. 34-35 provides a ligand contact to orotate; that stretch reads FF. 5-phospho-alpha-D-ribose 1-diphosphate is bound by residues 72-73, R99, K100, K103, H105, and 124-132; these read YK and DDVITAGTA. Orotate-binding residues include T128 and R156.

It belongs to the purine/pyrimidine phosphoribosyltransferase family. PyrE subfamily. In terms of assembly, homodimer. Mg(2+) serves as cofactor.

The enzyme catalyses orotidine 5'-phosphate + diphosphate = orotate + 5-phospho-alpha-D-ribose 1-diphosphate. Its pathway is pyrimidine metabolism; UMP biosynthesis via de novo pathway; UMP from orotate: step 1/2. In terms of biological role, catalyzes the transfer of a ribosyl phosphate group from 5-phosphoribose 1-diphosphate to orotate, leading to the formation of orotidine monophosphate (OMP). This is Orotate phosphoribosyltransferase from Vibrio atlanticus (strain LGP32) (Vibrio splendidus (strain Mel32)).